A 210-amino-acid polypeptide reads, in one-letter code: N-(5'-phosphoribosyl)anthranilate isomerase (210 aa).

It belongs to the TrpF family.

It carries out the reaction N-(5-phospho-beta-D-ribosyl)anthranilate = 1-(2-carboxyphenylamino)-1-deoxy-D-ribulose 5-phosphate. The protein operates within amino-acid biosynthesis; L-tryptophan biosynthesis; L-tryptophan from chorismate: step 3/5. The chain is N-(5'-phosphoribosyl)anthranilate isomerase from Crocosphaera subtropica (strain ATCC 51142 / BH68) (Cyanothece sp. (strain ATCC 51142)).